A 128-amino-acid chain; its full sequence is Large ribosomal subunit protein bL20 (128 aa).

The protein belongs to the bacterial ribosomal protein bL20 family.

Its function is as follows. Binds directly to 23S ribosomal RNA and is necessary for the in vitro assembly process of the 50S ribosomal subunit. It is not involved in the protein synthesizing functions of that subunit. This chain is Large ribosomal subunit protein bL20, found in Micrococcus luteus (strain ATCC 4698 / DSM 20030 / JCM 1464 / CCM 169 / CCUG 5858 / IAM 1056 / NBRC 3333 / NCIMB 9278 / NCTC 2665 / VKM Ac-2230) (Micrococcus lysodeikticus).